Consider the following 271-residue polypeptide: MAKHLYKTPIPSTRKGTVDRQVKSNPRNKLIHGRHRCGKGRNARGIITARHRGGGHKRLYRKIDFRRNQKDISGRIVTIEYDPNRNAYICLIHYGDGEKRYILHPRGAIIGDTIVSGTKVPISMGNALTDMPLGTAIHNIEITRGRGGQLARAAGAVAKLIAKEGKLATLRLPSGEVRLVSQNCLATVGQVGNVGVNQKSLGRAGSKCWLGKRPVVRGVVMNPVDHPHGGGEGKAPIGRKKPTTPWGYPALGRRTRKRKKYSDSFILRRRK.

2 disordered regions span residues 1 to 22 and 223 to 271; these read MAKH…DRQV and PVDH…RRRK.

The protein belongs to the universal ribosomal protein uL2 family. Part of the 50S ribosomal subunit.

It localises to the plastid. It is found in the chloroplast. This chain is Large ribosomal subunit protein uL2cz/uL2cy (rpl2-A), found in Sorghum bicolor (Sorghum).